The primary structure comprises 477 residues: E3 ubiquitin-protein ligase TRIM17 (477 aa).

An RING-type zinc finger spans residues 16 to 66 (CSICLDYFTDPVMTACGHNFCRECIQMSWEKGKGKKGKKKQKGSFPCPECR). The B box-type zinc-finger motif lies at 94–135 (HKRDLCQIHQEPLKLFCQDDQTPICVVCREAQEHRMHRVLPL). The Zn(2+) site is built by Cys-99, His-102, Cys-121, and His-127. Positions 135-225 (LDEAAREYKL…GKLQDSKASL (91 aa)) form a coiled coil. In terms of domain architecture, B30.2/SPRY spans 276–475 (AIKTVCRVPG…MVISTVTMWV (200 aa)).

It belongs to the TRIM/RBCC family. Interacts (via coiled coil) with TRIM44 (via coiled coil). Interacts with TRIM28; this interaction prevents TRIM28 activity on BCL2A1. Interacts with TRIM41; this interaction prevents TRIM41 activity on ZSCAN2. Interacts with BECN1. Interacts with NFATC3 and NFATC4; these interactions prevent NFATC3 and NFATC4 nuclear localization. In terms of processing, auto-ubiquitinated. In terms of tissue distribution, expressed almost exclusively in the testis.

It localises to the cytoplasm. The protein localises to the lysosome. The catalysed reaction is S-ubiquitinyl-[E2 ubiquitin-conjugating enzyme]-L-cysteine + [acceptor protein]-L-lysine = [E2 ubiquitin-conjugating enzyme]-L-cysteine + N(6)-ubiquitinyl-[acceptor protein]-L-lysine.. Its pathway is protein modification; protein ubiquitination. E3 ubiquitin ligase that plays important roles in the regulation of neuronal apoptosis, selective autophagy or cell proliferation. Stimulates the degradation of kinetochore ZW10 interacting protein ZWINT in a proteasome-dependent manner, leading to negative regulation of cell proliferation. Inhibits autophagic degradation of diverse known targets while contributing to autophagy of midbodies. Autophagy-inhibitory activity involves MCL1, which TRIM17 assembles into complexes with the key autophagy regulator BECN1. Controls neuronal apoptosis by mediating ubiquitination and degradation of MCL1 to initiate neuronal death. In addition, regulates NFAT transcription factors NFATC3 and NFATC4 activities by preventing their nuclear localization, thus inhibiting their transcriptional activities. Decreases TRIM41-mediated degradation of ZSCAN2 thereby stimulating alpha-synuclein/SNCA transcription in neuronal cells. Prevents the E3 ubiquitin-ligase activity of TRIM28 and its interaction with anti-apoptotic BCL2A1, blocking TRIM28 from ubiquitinating BCL2A1. The polypeptide is E3 ubiquitin-protein ligase TRIM17 (Trim17) (Rattus norvegicus (Rat)).